Reading from the N-terminus, the 477-residue chain is Probable cytosolic Fe-S cluster assembly factor GG21400 (477 aa).

8 residues coordinate [4Fe-4S] cluster: C23, C68, C71, C74, C187, C243, C395, and C399.

Belongs to the NARF family.

Component of the cytosolic iron-sulfur (Fe/S) protein assembly machinery. Required for maturation of extramitochondrial Fe/S proteins. The sequence is that of Probable cytosolic Fe-S cluster assembly factor GG21400 from Drosophila erecta (Fruit fly).